The chain runs to 273 residues: MSFVILVVLGLIAGTVGSLIGLGGGIVIVPSLMFLSTVTQLFQDVTPQVAIGTSLLVIIFTGLSSTLAYIKYKTVDYKSGLIFFIGSGPGSMIGAYVSKLFNSNSFSVWFGIFMILISLSLMLKAKARPINKAHKGIIRTFQDDAGEPYTYSYQASVGIAIAFVVGFLGGLFGIGGGSLMVPAMMLLFLFPPKVAVATSMFIIFLSSMTGSVSHMISGHVNWLYALALVPGAWFGGKLGAAINRKMQTKTIVMIMRIVLILIGCQLIYEGIFS.

Helical transmembrane passes span 3–23, 50–70, 81–101, 105–125, 157–177, 185–205, 222–242, and 251–271; these read FVILVVLGLIAGTVGSLIGLG, AIGTSLLVIIFTGLSSTLAYI, LIFFIGSGPGSMIGAYVSKLF, SFSVWFGIFMILISLSLMLKA, VGIAIAFVVGFLGGLFGIGGG, MLLFLFPPKVAVATSMFIIFL, WLYALALVPGAWFGGKLGAAI, and IVMIMRIVLILIGCQLIYEGI.

It belongs to the 4-toluene sulfonate uptake permease (TSUP) (TC 2.A.102) family.

It is found in the cell membrane. This is Probable membrane transporter protein YunE (yunE) from Bacillus subtilis (strain 168).